We begin with the raw amino-acid sequence, 628 residues long: Vacuolar-sorting receptor 4 (628 aa).

The N-terminal stretch at 1–24 (MKQLLCYLPWLLLLSLVVSPFNEA) is a signal peptide. Residues 25 to 569 (RFVVEKNSLS…SKTGSQVKSA (545 aa)) lie on the Lumenal side of the membrane. A PA domain is found at 56–168 (QYGGSMAGTV…GFGEKLKKAI (113 aa)). N-linked (GlcNAc...) asparagine glycosylation is found at N148, N294, and N434. EGF-like domains are found at residues 416-466 (ETNE…SHCE) and 469-516 (GPGR…KKCE). Intrachain disulfides connect C420-C438, C427-C447, C449-C465, C473-C493, C480-C501, C503-C515, and C545-C558. Residues 517–559 (DINECKEKKACQCPECSCKNTWGSYECSCSGDLLYMRDHDTCI) enclose the EGF-like 3; calcium-binding domain. A helical transmembrane segment spans residues 570–590 (WAAVWLIMLSLGLAAAGAYLV). Residues 591–628 (YKYRLRQYMDSEIRAIMAQYMPLDSQPEVPNHTNDERA) are Cytoplasmic-facing. The short motif at 610-613 (YMPL) is the Tyrosine-based internalization motif element.

Belongs to the VSR (BP-80) family. Expressed at low levels in seeds, seedlings, roots, stems, leaves, flowers and siliques.

The protein resides in the membrane. The protein localises to the golgi apparatus membrane. It localises to the cytoplasmic vesicle. It is found in the clathrin-coated vesicle membrane. Its subcellular location is the prevacuolar compartment membrane. Functionally, vacuolar-sorting receptor (VSR) involved in clathrin-coated vesicles sorting from Golgi apparatus to vacuoles. The sequence is that of Vacuolar-sorting receptor 4 (VSR4) from Arabidopsis thaliana (Mouse-ear cress).